The sequence spans 42 residues: Packaging protein P20 (42 aa).

A helical membrane pass occupies residues I11–C31.

In terms of assembly, heterodimer of P20 and P22; further multimerizes as hexamers of heterodimers. Part of the dodecameric portal complex that is composed of the packaging efficiency factor P6, the DNA packaging ATPase P9, and the internal heterododecamer P20/P22 which spans the virion inner membrane.

The protein resides in the virion membrane. In terms of biological role, together with P22, forms the internal part of the portal complex embeded in the virion internal membrane and which plays critical roles in genome packaging and genome ejection. Both proteins multimerize as a single ring-shaped heterdodecamer arranged around a central channel and interact with the P6/P9 external part of the portal. The sequence is that of Packaging protein P20 (XX) from Acinetobacter calcoaceticus (Arthrobacter siderocapsulatus).